A 375-amino-acid polypeptide reads, in one-letter code: GDSL esterase/lipase At5g45960 (375 aa).

A signal peptide spans 1 to 28; the sequence is MRSHHRHFSSYVSFILFLFLFFISFSSS. Serine 54 functions as the Nucleophile in the catalytic mechanism. Asparagine 340 carries an N-linked (GlcNAc...) asparagine glycan. Residues aspartate 348 and histidine 351 contribute to the active site.

Belongs to the 'GDSL' lipolytic enzyme family.

Its subcellular location is the secreted. In Arabidopsis thaliana (Mouse-ear cress), this protein is GDSL esterase/lipase At5g45960.